The following is a 330-amino-acid chain: Methylthioribose-1-phosphate isomerase (330 aa).

Substrate contacts are provided by residues 49–51 (RGA), Arg83, and Gln179. Asp220 acts as the Proton donor in catalysis. 230–231 (NK) contacts substrate.

The protein belongs to the eIF-2B alpha/beta/delta subunits family. MtnA subfamily.

It catalyses the reaction 5-(methylsulfanyl)-alpha-D-ribose 1-phosphate = 5-(methylsulfanyl)-D-ribulose 1-phosphate. Its pathway is amino-acid biosynthesis; L-methionine biosynthesis via salvage pathway; L-methionine from S-methyl-5-thio-alpha-D-ribose 1-phosphate: step 1/6. Catalyzes the interconversion of methylthioribose-1-phosphate (MTR-1-P) into methylthioribulose-1-phosphate (MTRu-1-P). The protein is Methylthioribose-1-phosphate isomerase of Thermus thermophilus (strain ATCC 27634 / DSM 579 / HB8).